We begin with the raw amino-acid sequence, 236 residues long: 3-deoxy-D-manno-octulosonic acid kinase (236 aa).

Aspartate 167 is a catalytic residue.

It belongs to the protein kinase superfamily. KdkA/RfaP family.

Its subcellular location is the cell inner membrane. It catalyses the reaction an alpha-Kdo-(2-&gt;6)-lipid IVA + ATP = a 4-O-phospho-alpha-Kdo-(2-&gt;6)-lipid IVA + ADP + H(+). Its pathway is bacterial outer membrane biogenesis; LPS core biosynthesis. Its function is as follows. Catalyzes the ATP-dependent phosphorylation of the 3-deoxy-D-manno-octulosonic acid (Kdo) residue in Kdo-lipid IV(A) at the 4-OH position. The chain is 3-deoxy-D-manno-octulosonic acid kinase from Vibrio vulnificus (strain CMCP6).